The primary structure comprises 197 residues: Nucleoside triphosphate pyrophosphatase (197 aa).

The active-site Proton acceptor is Asp-72.

Belongs to the Maf family. A divalent metal cation is required as a cofactor.

The protein localises to the cytoplasm. It carries out the reaction a ribonucleoside 5'-triphosphate + H2O = a ribonucleoside 5'-phosphate + diphosphate + H(+). It catalyses the reaction a 2'-deoxyribonucleoside 5'-triphosphate + H2O = a 2'-deoxyribonucleoside 5'-phosphate + diphosphate + H(+). In terms of biological role, nucleoside triphosphate pyrophosphatase. May have a dual role in cell division arrest and in preventing the incorporation of modified nucleotides into cellular nucleic acids. The protein is Nucleoside triphosphate pyrophosphatase of Corynebacterium glutamicum (strain R).